We begin with the raw amino-acid sequence, 181 residues long: ATP synthase subunit delta (181 aa).

It belongs to the ATPase delta chain family. As to quaternary structure, F-type ATPases have 2 components, F(1) - the catalytic core - and F(0) - the membrane proton channel. F(1) has five subunits: alpha(3), beta(3), gamma(1), delta(1), epsilon(1). F(0) has three main subunits: a(1), b(2) and c(10-14). The alpha and beta chains form an alternating ring which encloses part of the gamma chain. F(1) is attached to F(0) by a central stalk formed by the gamma and epsilon chains, while a peripheral stalk is formed by the delta and b chains.

It is found in the cell inner membrane. Functionally, f(1)F(0) ATP synthase produces ATP from ADP in the presence of a proton or sodium gradient. F-type ATPases consist of two structural domains, F(1) containing the extramembraneous catalytic core and F(0) containing the membrane proton channel, linked together by a central stalk and a peripheral stalk. During catalysis, ATP synthesis in the catalytic domain of F(1) is coupled via a rotary mechanism of the central stalk subunits to proton translocation. In terms of biological role, this protein is part of the stalk that links CF(0) to CF(1). It either transmits conformational changes from CF(0) to CF(1) or is implicated in proton conduction. This chain is ATP synthase subunit delta, found in Chlorobaculum tepidum (strain ATCC 49652 / DSM 12025 / NBRC 103806 / TLS) (Chlorobium tepidum).